A 51-amino-acid chain; its full sequence is MARTNVKLCPPKRSKRPSNSRSKSTSHSNRRSLNSLRRTRTSRRSNNGKFT.

The disordered stretch occupies residues 1 to 51; that stretch reads MARTNVKLCPPKRSKRPSNSRSKSTSHSNRRSLNSLRRTRTSRRSNNGKFT. Over residues 19-36 the composition is skewed to low complexity; that stretch reads NSRSKSTSHSNRRSLNSL.

This is an uncharacterized protein from Bdellovibrio bacteriovorus (Bacteriophage phiMH2K).